The sequence spans 60 residues: Large ribosomal subunit protein bL32 (60 aa).

The protein belongs to the bacterial ribosomal protein bL32 family.

The chain is Large ribosomal subunit protein bL32 from Paramagnetospirillum magneticum (strain ATCC 700264 / AMB-1) (Magnetospirillum magneticum).